A 243-amino-acid chain; its full sequence is Small ribosomal subunit protein uS3 (243 aa).

The 72-residue stretch at 39-110 (IRTFIQKKYS…QVRINVVEVE (72 aa)) folds into the KH type-2 domain. The disordered stretch occupies residues 221 to 243 (GAIPRRKGSRKPQQFEDRSNENS). Basic and acidic residues predominate over residues 233-243 (QQFEDRSNENS).

The protein belongs to the universal ribosomal protein uS3 family. Part of the 30S ribosomal subunit. Forms a tight complex with proteins S10 and S14.

Functionally, binds the lower part of the 30S subunit head. Binds mRNA in the 70S ribosome, positioning it for translation. In Prochlorococcus marinus subsp. pastoris (strain CCMP1986 / NIES-2087 / MED4), this protein is Small ribosomal subunit protein uS3.